Consider the following 621-residue polypeptide: Kelch-like protein 40 (621 aa).

One can recognise a BTB domain in the interval 33 to 98; it reads LDCVVRAGER…LYTSEIALDE (66 aa). The BACK domain maps to 133–239; sequence CLAVFRLGLL…PRAFLESRVE (107 aa). Residues 265–295 are disordered; sequence ITTLRKKKKGKDGAGAKEADKGTSKAKAEED. Basic and acidic residues predominate over residues 275 to 292; sequence KDGAGAKEADKGTSKAKA. 5 Kelch repeats span residues 360-412, 413-462, 463-510, 512-557, and 559-613; these read QVFV…EALN, SIYV…SHMD, LVYV…VHDG, IIVA…SLVG, and LYAI…PVRL.

This sequence belongs to the KLHL40 family. As to quaternary structure, component of the BCR(KLHL40) E3 ubiquitin ligase complex, at least composed of CUL3, KLHL40 and RBX1. Interacts with LMOD3. In terms of tissue distribution, highly expressed in fetal (19, 23 and 31 weeks of gestation) and adult skeletal muscle; expression levels tend to be higher in fetal compared to postnatal muscles (at protein level). Also expressed in fetal and adult heart.

It localises to the cytoplasm. The protein localises to the myofibril. It is found in the sarcomere. Its subcellular location is the a band. The protein resides in the i band. Functionally, substrate-specific adapter of a BCR (BTB-CUL3-RBX1) E3 ubiquitin ligase complex that acts as a key regulator of skeletal muscle development. The BCR(KLHL40) complex acts by mediating ubiquitination and degradation of TFDP1, thereby regulating the activity of the E2F:DP transcription factor complex. Promotes stabilization of LMOD3 by acting as a negative regulator of LMOD3 ubiquitination; the molecular process by which it negatively regulates ubiquitination of LMOD3 is however unclear. The polypeptide is Kelch-like protein 40 (Homo sapiens (Human)).